The following is a 240-amino-acid chain: Poxin (240 aa).

The Proton donor role is filled by H46. The active-site Shared with catalytic histidine of dimeric partner is the Y181. The active-site Proton acceptor; shared with catalytic histidine of dimeric partner is K185.

The protein belongs to the poxin family. In terms of assembly, homodimer.

The enzyme catalyses 2',3'-cGAMP + H2O = Gp(2'-5')Ap(3') + H(+). Nuclease that cleaves host 2',3'-cGAMP. This is Poxin (p26) from Bombyx mori (Silk moth).